The primary structure comprises 349 residues: S-adenosylmethionine:tRNA ribosyltransferase-isomerase (349 aa).

This sequence belongs to the QueA family. Monomer.

Its subcellular location is the cytoplasm. It carries out the reaction 7-aminomethyl-7-carbaguanosine(34) in tRNA + S-adenosyl-L-methionine = epoxyqueuosine(34) in tRNA + adenine + L-methionine + 2 H(+). Its pathway is tRNA modification; tRNA-queuosine biosynthesis. Transfers and isomerizes the ribose moiety from AdoMet to the 7-aminomethyl group of 7-deazaguanine (preQ1-tRNA) to give epoxyqueuosine (oQ-tRNA). The chain is S-adenosylmethionine:tRNA ribosyltransferase-isomerase from Pseudomonas putida (strain GB-1).